Reading from the N-terminus, the 360-residue chain is Phosphoserine aminotransferase (360 aa).

Residue arginine 41 participates in L-glutamate binding. Residues tryptophan 101, threonine 152, aspartate 172, and glutamine 195 each contribute to the pyridoxal 5'-phosphate site. Position 196 is an N6-(pyridoxal phosphate)lysine (lysine 196). A pyridoxal 5'-phosphate-binding site is contributed by 237–238 (NT).

The protein belongs to the class-V pyridoxal-phosphate-dependent aminotransferase family. SerC subfamily. As to quaternary structure, homodimer. Pyridoxal 5'-phosphate is required as a cofactor.

It localises to the cytoplasm. It carries out the reaction O-phospho-L-serine + 2-oxoglutarate = 3-phosphooxypyruvate + L-glutamate. The catalysed reaction is 4-(phosphooxy)-L-threonine + 2-oxoglutarate = (R)-3-hydroxy-2-oxo-4-phosphooxybutanoate + L-glutamate. It functions in the pathway amino-acid biosynthesis; L-serine biosynthesis; L-serine from 3-phospho-D-glycerate: step 2/3. It participates in cofactor biosynthesis; pyridoxine 5'-phosphate biosynthesis; pyridoxine 5'-phosphate from D-erythrose 4-phosphate: step 3/5. Its function is as follows. Catalyzes the reversible conversion of 3-phosphohydroxypyruvate to phosphoserine and of 3-hydroxy-2-oxo-4-phosphonooxybutanoate to phosphohydroxythreonine. This Burkholderia cenocepacia (strain HI2424) protein is Phosphoserine aminotransferase.